Reading from the N-terminus, the 147-residue chain is uncharacterized protein (147 aa).

The disordered stretch occupies residues 23–48 (EEVSQPEPNTANDSSTEYKGKSKDDF). Residues 28–37 (PEPNTANDSS) show a composition bias toward polar residues. The span at 38–48 (TEYKGKSKDDF) shows a compositional bias: basic and acidic residues. Residues 85-105 (LMFCIIACSFICAIQFLFFII) traverse the membrane as a helical segment.

It is found in the membrane. This is an uncharacterized protein from Saccharomyces cerevisiae (strain ATCC 204508 / S288c) (Baker's yeast).